Here is a 65-residue protein sequence, read N- to C-terminus: DNA gyrase inhibitor YacG (65 aa).

Positions 8, 11, 27, and 31 each coordinate Zn(2+). Residues 43–65 (SYRIPDTGKDSEKQENDPSGSEK) are disordered. The span at 48-65 (DTGKDSEKQENDPSGSEK) shows a compositional bias: basic and acidic residues.

This sequence belongs to the DNA gyrase inhibitor YacG family. In terms of assembly, interacts with GyrB. Zn(2+) serves as cofactor.

In terms of biological role, inhibits all the catalytic activities of DNA gyrase by preventing its interaction with DNA. Acts by binding directly to the C-terminal domain of GyrB, which probably disrupts DNA binding by the gyrase. The protein is DNA gyrase inhibitor YacG of Nitrosospira multiformis (strain ATCC 25196 / NCIMB 11849 / C 71).